Consider the following 632-residue polypeptide: MAHETMSFQAEVKQLLHLMIHSLYSNKEIFLRELVSNASDAADKLRFEGLADNALYENDPNLRIRIGYDKAARTITIDDNGIGMSRDEAIANLGTIARSGTKEFFTKLSGDQQKDAALIGQFGVGFYSGFIVADKITVETRRAGLPANEAVRWESAGEGDFTIDAIERAQRGTTITLHLREGEDDLLSSHRLKSIIQKYSDHIALPILMRKEEWDQEKGEMVLKDEDETVNQASALWTRSKSDVTDEQYTQFYQHIAHDHQDPLTWTHNRVEGRSEYTQLLFVPAHAPFDLWNRDYRGGLKLYVKRVFIMDDAEQLLPQYLRFVKGVVDSADLPLNVSREILQESRDVKAIREGVTKRALSMLEELANAEDDAGKEKYKTFWGAFGQVLKEGLGEDHANRERIAKLLRFASTHGDTDAQDVSLADYVSRMKPEQSKIYYVTADTWQAAKNSPHLEVFRKKGVEVLLLTDRVDEWMLSFLHEFDGKPLASVARGDLDLGELNDEEKKAQEQAGEAIKPVVEKMKEALGDKVKEVRVTFRLTDSPSCLVADDNDMSGYLQRMLKAAGQNAPAMQPILEINPEHALVKQLNADSADFGDWCHLLFDQALLAEGGMLDDPASFVKRTNALLLSRAA.

Positions 1-339 are a; substrate-binding; sequence MAHETMSFQA…SADLPLNVSR (339 aa). Positions 340–559 are b; the sequence is EILQESRDVK…DNDMSGYLQR (220 aa). The interval 560 to 632 is c; it reads MLKAAGQNAP…TNALLLSRAA (73 aa).

This sequence belongs to the heat shock protein 90 family. In terms of assembly, homodimer.

The protein resides in the cytoplasm. Functionally, molecular chaperone. Has ATPase activity. This is Chaperone protein HtpG from Burkholderia cenocepacia (strain HI2424).